We begin with the raw amino-acid sequence, 60 residues long: Large ribosomal subunit protein bL32 (60 aa).

Belongs to the bacterial ribosomal protein bL32 family.

This is Large ribosomal subunit protein bL32 from Borreliella afzelii (strain PKo) (Borrelia afzelii).